The chain runs to 419 residues: L-rhamnose isomerase (419 aa).

Mn(2+) contacts are provided by histidine 262, aspartate 294, and aspartate 296.

Belongs to the rhamnose isomerase family. In terms of assembly, homotetramer. Mn(2+) serves as cofactor.

It localises to the cytoplasm. The enzyme catalyses L-rhamnopyranose = L-rhamnulose. It participates in carbohydrate degradation; L-rhamnose degradation; glycerone phosphate from L-rhamnose: step 1/3. Its function is as follows. Catalyzes the interconversion of L-rhamnose and L-rhamnulose. The sequence is that of L-rhamnose isomerase from Shigella boydii serotype 4 (strain Sb227).